A 336-amino-acid chain; its full sequence is Glycerol-3-phosphate dehydrogenase [NAD(P)+] (336 aa).

5 residues coordinate NADPH: Ser-14, Trp-15, Arg-35, Arg-36, and Lys-109. Residues Lys-109 and Gly-139 each coordinate sn-glycerol 3-phosphate. Ala-143 is a binding site for NADPH. Residues Lys-194, Asp-247, Ser-257, Arg-258, and Asn-259 each coordinate sn-glycerol 3-phosphate. The Proton acceptor role is filled by Lys-194. An NADPH-binding site is contributed by Arg-258. An NADPH-binding site is contributed by Glu-284.

The protein belongs to the NAD-dependent glycerol-3-phosphate dehydrogenase family.

The protein localises to the cytoplasm. It carries out the reaction sn-glycerol 3-phosphate + NAD(+) = dihydroxyacetone phosphate + NADH + H(+). The catalysed reaction is sn-glycerol 3-phosphate + NADP(+) = dihydroxyacetone phosphate + NADPH + H(+). The protein operates within membrane lipid metabolism; glycerophospholipid metabolism. In terms of biological role, catalyzes the reduction of the glycolytic intermediate dihydroxyacetone phosphate (DHAP) to sn-glycerol 3-phosphate (G3P), the key precursor for phospholipid synthesis. The sequence is that of Glycerol-3-phosphate dehydrogenase [NAD(P)+] from Streptomyces griseus subsp. griseus (strain JCM 4626 / CBS 651.72 / NBRC 13350 / KCC S-0626 / ISP 5235).